A 1371-amino-acid chain; its full sequence is Probable serine/threonine-protein kinase DDB_G0293292 (1371 aa).

2 consecutive Protein kinase domains span residues 9–269 (NKIL…HPNT) and 1131–1371 (FKEV…QPTL). ATP-binding positions include 15-23 (IDDGNTKRK) and lysine 39. Aspartate 143 serves as the catalytic Proton acceptor.

This sequence belongs to the protein kinase superfamily. Ser/Thr protein kinase family.

The catalysed reaction is L-seryl-[protein] + ATP = O-phospho-L-seryl-[protein] + ADP + H(+). It carries out the reaction L-threonyl-[protein] + ATP = O-phospho-L-threonyl-[protein] + ADP + H(+). The sequence is that of Probable serine/threonine-protein kinase DDB_G0293292 from Dictyostelium discoideum (Social amoeba).